We begin with the raw amino-acid sequence, 535 residues long: Isoleucine N-monooxygenase 1 (535 aa).

The Cytoplasmic portion of the chain corresponds to 1–8; it reads MGLMPDFL. A helical; Signal-anchor for type II membrane protein transmembrane segment spans residues 9-29; sequence SLCHEFPWTFLLVVIFSFMIF. Residues 30–535 lie on the Lumenal side of the membrane; sequence KVTKTHLVNK…AAELYRTNEI (506 aa). 3 N-linked (GlcNAc...) asparagine glycosylation sites follow: N38, N232, and N404. C470 contacts heme.

Belongs to the cytochrome P450 family. It depends on heme as a cofactor. As to expression, exclusively expressed in aerial parts. Highest expression in the apical leaves. Also detected in the second leaf from the top and in the stem. Not expressed in older leaves or roots.

The protein resides in the microsome membrane. The catalysed reaction is L-isoleucine + 2 reduced [NADPH--hemoprotein reductase] + 2 O2 = (1E,2S)-2-methylbutanal oxime + 2 oxidized [NADPH--hemoprotein reductase] + CO2 + 3 H2O + 2 H(+). It carries out the reaction L-isoleucine + reduced [NADPH--hemoprotein reductase] + O2 = N-hydroxy-L-isoleucine + oxidized [NADPH--hemoprotein reductase] + H2O + 2 H(+). It catalyses the reaction N-hydroxy-L-isoleucine + reduced [NADPH--hemoprotein reductase] + O2 = N,N-dihydroxy-L-isoleucine + oxidized [NADPH--hemoprotein reductase] + H2O + H(+). The enzyme catalyses L-valine + 2 reduced [NADPH--hemoprotein reductase] + 2 O2 = (E)-2-methylpropanal oxime + 2 oxidized [NADPH--hemoprotein reductase] + CO2 + 3 H2O + 2 H(+). The catalysed reaction is L-valine + reduced [NADPH--hemoprotein reductase] + O2 = N-hydroxy-L-valine + oxidized [NADPH--hemoprotein reductase] + H2O + 2 H(+). It carries out the reaction N-hydroxy-L-valine + reduced [NADPH--hemoprotein reductase] + O2 = N,N-dihydroxy-L-valine + oxidized [NADPH--hemoprotein reductase] + H2O + H(+). Its pathway is secondary metabolite biosynthesis. Its function is as follows. Involved in the biosynthesis of the cyanogenic glucosides linamarin and lotaustralin and of the nitirle glucosides rhodiocyanoside A and D. Can use L-isoleucine &gt; L-valine as substrate, but not L-leucine, L-phenylalanine or L-tyrosine. Catalyzes multi-step reactions starting with two successive N-hydroxylations using L-isoleucine and, to a lower extent, L-valine as substrates leading to the formation of N,N-dihydroxy-L-valine and N,N-dihydroxy-L-isoleucine, respectively; following spontaneous reactions lead to the production of (E)-2-methylpropanal oxime and (1E,2S)-2-methylbutanal oxime, respectively. The sequence is that of Isoleucine N-monooxygenase 1 from Lotus japonicus (Lotus corniculatus var. japonicus).